The sequence spans 85 residues: Small ribosomal subunit protein uS17 (85 aa).

It belongs to the universal ribosomal protein uS17 family. As to quaternary structure, part of the 30S ribosomal subunit.

In terms of biological role, one of the primary rRNA binding proteins, it binds specifically to the 5'-end of 16S ribosomal RNA. The chain is Small ribosomal subunit protein uS17 from Geobacter sp. (strain M21).